The chain runs to 1409 residues: DNA-directed RNA polymerase subunit beta' (1409 aa).

Zn(2+) is bound by residues Cys-70, Cys-72, Cys-85, and Cys-88. The Mg(2+) site is built by Asp-458, Asp-460, and Asp-462. Cys-813, Cys-887, Cys-894, and Cys-897 together coordinate Zn(2+).

This sequence belongs to the RNA polymerase beta' chain family. As to quaternary structure, the RNAP catalytic core consists of 2 alpha, 1 beta, 1 beta' and 1 omega subunit. When a sigma factor is associated with the core the holoenzyme is formed, which can initiate transcription. Requires Mg(2+) as cofactor. It depends on Zn(2+) as a cofactor.

The catalysed reaction is RNA(n) + a ribonucleoside 5'-triphosphate = RNA(n+1) + diphosphate. Functionally, DNA-dependent RNA polymerase catalyzes the transcription of DNA into RNA using the four ribonucleoside triphosphates as substrates. This Acidovorax ebreus (strain TPSY) (Diaphorobacter sp. (strain TPSY)) protein is DNA-directed RNA polymerase subunit beta'.